The sequence spans 486 residues: ATP synthase subunit beta (486 aa).

170-177 serves as a coordination point for ATP; that stretch reads GGAGVGKT.

The protein belongs to the ATPase alpha/beta chains family. F-type ATPases have 2 components, CF(1) - the catalytic core - and CF(0) - the membrane proton channel. CF(1) has five subunits: alpha(3), beta(3), gamma(1), delta(1), epsilon(1). CF(0) has three main subunits: a(1), b(2) and c(9-12). The alpha and beta chains form an alternating ring which encloses part of the gamma chain. CF(1) is attached to CF(0) by a central stalk formed by the gamma and epsilon chains, while a peripheral stalk is formed by the delta and b chains.

The protein localises to the cell membrane. It carries out the reaction ATP + H2O + 4 H(+)(in) = ADP + phosphate + 5 H(+)(out). Its function is as follows. Produces ATP from ADP in the presence of a proton gradient across the membrane. The catalytic sites are hosted primarily by the beta subunits. The sequence is that of ATP synthase subunit beta from Clavibacter michiganensis subsp. michiganensis (strain NCPPB 382).